The primary structure comprises 150 residues: Large ribosomal subunit protein bL9 (150 aa).

Belongs to the bacterial ribosomal protein bL9 family.

In terms of biological role, binds to the 23S rRNA. The protein is Large ribosomal subunit protein bL9 of Shewanella sp. (strain MR-4).